The chain runs to 250 residues: Ribonuclease PH (250 aa).

Phosphate contacts are provided by residues Arg-87 and 125–127; that span reads GTR.

This sequence belongs to the RNase PH family. Homohexameric ring arranged as a trimer of dimers.

The catalysed reaction is tRNA(n+1) + phosphate = tRNA(n) + a ribonucleoside 5'-diphosphate. Functionally, phosphorolytic 3'-5' exoribonuclease that plays an important role in tRNA 3'-end maturation. Removes nucleotide residues following the 3'-CCA terminus of tRNAs; can also add nucleotides to the ends of RNA molecules by using nucleoside diphosphates as substrates, but this may not be physiologically important. Probably plays a role in initiation of 16S rRNA degradation (leading to ribosome degradation) during starvation. This chain is Ribonuclease PH, found in Moorella thermoacetica (strain ATCC 39073 / JCM 9320).